Here is a 236-residue protein sequence, read N- to C-terminus: Glucosamine-6-phosphate deaminase (236 aa).

Residue D62 is the Proton acceptor; for enolization step of the active site. The active-site For ring-opening step is the N128. Residue H130 is the Proton acceptor; for ring-opening step of the active site. E135 serves as the catalytic For ring-opening step.

The protein belongs to the glucosamine/galactosamine-6-phosphate isomerase family. NagB subfamily.

The enzyme catalyses alpha-D-glucosamine 6-phosphate + H2O = beta-D-fructose 6-phosphate + NH4(+). It functions in the pathway amino-sugar metabolism; N-acetylneuraminate degradation; D-fructose 6-phosphate from N-acetylneuraminate: step 5/5. In terms of biological role, catalyzes the reversible isomerization-deamination of glucosamine 6-phosphate (GlcN6P) to form fructose 6-phosphate (Fru6P) and ammonium ion. This Oenococcus oeni (strain ATCC BAA-331 / PSU-1) protein is Glucosamine-6-phosphate deaminase.